A 238-amino-acid chain; its full sequence is MIILPAIDLRMGKCVRLYKGDFNKTEIVAESAVDTALMFKECGAEYIHIVDLDGALKGKGINLDIVCELIKKVDIPIEFGGGIRDIETIDYLIDIGVSRIILGTAALNNEKLVREAIKRYDDKVAVGIDAKNGYVAVEGWLNLSNVNYIDFAKKMESIGVKNIIFTDISRDGTLNGPNFDALLKLKENINCNITASGGIKDVNDIKKLKEFNIYGAIVGKAIYSNNIDLKEAIKLSEK.

The active-site Proton acceptor is Asp8. Residue Asp129 is the Proton donor of the active site.

This sequence belongs to the HisA/HisF family.

It localises to the cytoplasm. The catalysed reaction is 1-(5-phospho-beta-D-ribosyl)-5-[(5-phospho-beta-D-ribosylamino)methylideneamino]imidazole-4-carboxamide = 5-[(5-phospho-1-deoxy-D-ribulos-1-ylimino)methylamino]-1-(5-phospho-beta-D-ribosyl)imidazole-4-carboxamide. Its pathway is amino-acid biosynthesis; L-histidine biosynthesis; L-histidine from 5-phospho-alpha-D-ribose 1-diphosphate: step 4/9. In Clostridium novyi (strain NT), this protein is 1-(5-phosphoribosyl)-5-[(5-phosphoribosylamino)methylideneamino] imidazole-4-carboxamide isomerase.